The sequence spans 693 residues: DNA ligase (693 aa).

Residues 35 to 39 (DAEYD), 84 to 85 (SI), and glutamate 121 each bind NAD(+). The active-site N6-AMP-lysine intermediate is the lysine 123. NAD(+) contacts are provided by arginine 144, glutamate 180, lysine 297, and lysine 321. Cysteine 418, cysteine 421, cysteine 436, and cysteine 442 together coordinate Zn(2+). Positions 601–690 (PASGSVAGLT…EQSPINNKDG (90 aa)) constitute a BRCT domain.

Belongs to the NAD-dependent DNA ligase family. LigA subfamily. It depends on Mg(2+) as a cofactor. Requires Mn(2+) as cofactor.

The enzyme catalyses NAD(+) + (deoxyribonucleotide)n-3'-hydroxyl + 5'-phospho-(deoxyribonucleotide)m = (deoxyribonucleotide)n+m + AMP + beta-nicotinamide D-nucleotide.. DNA ligase that catalyzes the formation of phosphodiester linkages between 5'-phosphoryl and 3'-hydroxyl groups in double-stranded DNA using NAD as a coenzyme and as the energy source for the reaction. It is essential for DNA replication and repair of damaged DNA. The protein is DNA ligase of Azoarcus sp. (strain BH72).